Consider the following 548-residue polypeptide: Fumarate hydratase class I, aerobic (548 aa).

3 residues coordinate [4Fe-4S] cluster: Cys-105, Cys-224, and Cys-318.

It belongs to the class-I fumarase family. Homodimer. The cofactor is [4Fe-4S] cluster.

The enzyme catalyses (S)-malate = fumarate + H2O. It carries out the reaction oxaloacetate = enol-oxaloacetate. The protein operates within carbohydrate metabolism; tricarboxylic acid cycle; (S)-malate from fumarate: step 1/1. Catalyzes the reversible hydration of fumarate to (S)-malate. Functions as an aerobic enzyme in the direction of malate formation as part of the citric acid cycle. Accounts for about 80% of the fumarase activity when the bacteria grow aerobically. To a lesser extent, also displays D-tartrate dehydratase activity in vitro, but is not able to convert (R)-malate, L-tartrate or meso-tartrate. Can also catalyze the isomerization of enol- to keto-oxaloacetate. The sequence is that of Fumarate hydratase class I, aerobic from Escherichia coli O6:H1 (strain CFT073 / ATCC 700928 / UPEC).